A 334-amino-acid chain; its full sequence is G2/mitotic-specific cyclin-1 (334 aa).

This sequence belongs to the cyclin family. Cyclin AB subfamily.

Functionally, essential for the control of the cell cycle at the G2/M (mitosis) transition. This Trypanosoma brucei brucei protein is G2/mitotic-specific cyclin-1 (CYC1).